The primary structure comprises 250 residues: DNA repair protein RecO (250 aa).

The protein belongs to the RecO family.

Involved in DNA repair and RecF pathway recombination. The polypeptide is DNA repair protein RecO (Rhodopseudomonas palustris (strain ATCC BAA-98 / CGA009)).